A 392-amino-acid polypeptide reads, in one-letter code: Selenide, water dikinase 1 (392 aa).

The active site involves cysteine 31. ATP-binding positions include lysine 32, 67–69 (GMD), aspartate 87, aspartate 110, and 161–164 (GGQT). Residue aspartate 69 participates in Mg(2+) binding. A Mg(2+)-binding site is contributed by aspartate 110. Residue aspartate 265 coordinates Mg(2+). The residue at position 387 (threonine 387) is a Phosphothreonine.

It belongs to the selenophosphate synthase 1 family. Class II subfamily. Homodimer. The cofactor is Mg(2+).

The protein localises to the cell membrane. The protein resides in the nucleus membrane. The catalysed reaction is hydrogenselenide + ATP + H2O = selenophosphate + AMP + phosphate + 2 H(+). In terms of biological role, synthesizes selenophosphate from selenide and ATP. This is Selenide, water dikinase 1 (sephs1) from Danio rerio (Zebrafish).